Here is a 137-residue protein sequence, read N- to C-terminus: SPbeta prophage-derived disulfide bond formation protein A (137 aa).

The first 25 residues, 1–25 (MKKWIVLFLVLIAAAISIFVYVSTG), serve as a signal peptide directing secretion. One can recognise a Thioredoxin domain in the interval 26–136 (SEKPFYNDIN…IEKFFDKNGD (111 aa)). Cysteines 58 and 61 form a disulfide.

This sequence belongs to the thioredoxin family.

The protein localises to the secreted. In terms of biological role, unknown; dispensable for production of the lantibiotic sublancin 168 and for competence for DNA uptake. This chain is SPbeta prophage-derived disulfide bond formation protein A (bdbA), found in Bacillus subtilis (strain 168).